We begin with the raw amino-acid sequence, 303 residues long: Sporulation regulatory protein (303 aa).

In terms of domain architecture, FtsK spans 26–213 (TGRLRAGLRK…HRVNDKQTAE (188 aa)). Residue 43–50 (GANHSGKS) participates in ATP binding.

Its function is as follows. Involved in sporulation inhibition and pock formation. The sequence is that of Sporulation regulatory protein (spi) from Streptomyces azureus.